The chain runs to 245 residues: 2,3-bisphosphoglycerate-dependent phosphoglycerate mutase 1 (245 aa).

Substrate is bound by residues 8–15 (RHGQSLWN), 21–22 (TG), Arg-60, 87–90 (ERHY), Lys-98, 114–115 (RR), and 183–184 (GN). His-9 acts as the Tele-phosphohistidine intermediate in catalysis. The active-site Proton donor/acceptor is the Glu-87.

The protein belongs to the phosphoglycerate mutase family. BPG-dependent PGAM subfamily.

The enzyme catalyses (2R)-2-phosphoglycerate = (2R)-3-phosphoglycerate. Its pathway is carbohydrate degradation; glycolysis; pyruvate from D-glyceraldehyde 3-phosphate: step 3/5. Catalyzes the interconversion of 2-phosphoglycerate and 3-phosphoglycerate. The polypeptide is 2,3-bisphosphoglycerate-dependent phosphoglycerate mutase 1 (Bacillus cereus (strain ATCC 10987 / NRS 248)).